Consider the following 171-residue polypeptide: S-ribosylhomocysteine lyase (171 aa).

Residues histidine 54, histidine 58, and cysteine 128 each coordinate Fe cation.

It belongs to the LuxS family. Homodimer. Fe cation serves as cofactor.

The catalysed reaction is S-(5-deoxy-D-ribos-5-yl)-L-homocysteine = (S)-4,5-dihydroxypentane-2,3-dione + L-homocysteine. In terms of biological role, involved in the synthesis of autoinducer 2 (AI-2) which is secreted by bacteria and is used to communicate both the cell density and the metabolic potential of the environment. The regulation of gene expression in response to changes in cell density is called quorum sensing. Catalyzes the transformation of S-ribosylhomocysteine (RHC) to homocysteine (HC) and 4,5-dihydroxy-2,3-pentadione (DPD). This chain is S-ribosylhomocysteine lyase, found in Campylobacter curvus (strain 525.92).